We begin with the raw amino-acid sequence, 311 residues long: Methionyl-tRNA formyltransferase (311 aa).

110–113 (SLLP) is a (6S)-5,6,7,8-tetrahydrofolate binding site.

Belongs to the Fmt family.

It catalyses the reaction L-methionyl-tRNA(fMet) + (6R)-10-formyltetrahydrofolate = N-formyl-L-methionyl-tRNA(fMet) + (6S)-5,6,7,8-tetrahydrofolate + H(+). Its function is as follows. Attaches a formyl group to the free amino group of methionyl-tRNA(fMet). The formyl group appears to play a dual role in the initiator identity of N-formylmethionyl-tRNA by promoting its recognition by IF2 and preventing the misappropriation of this tRNA by the elongation apparatus. This Streptococcus thermophilus (strain ATCC BAA-250 / LMG 18311) protein is Methionyl-tRNA formyltransferase.